Consider the following 266-residue polypeptide: Beta-lactamase OXA-11 (266 aa).

Positions 1-20 (MKTFAAYVIIACLSSTALAG) are cleaved as a signal peptide. The active-site Acyl-ester intermediate is Ser67. Lys70 bears the N6-carboxylysine mark. 205-207 (KTG) serves as a coordination point for substrate.

The protein belongs to the class-D beta-lactamase family.

It carries out the reaction a beta-lactam + H2O = a substituted beta-amino acid. Hydrolyzes carbenicillin, oxacillin and cephalosporin. Does not hydrolyze cefoxitin or carbapenems. In Pseudomonas aeruginosa, this protein is Beta-lactamase OXA-11 (bla).